Reading from the N-terminus, the 350-residue chain is Twinfilin-1 (350 aa).

Residue Ser-2 is modified to N-acetylserine. The 138-residue stretch at 2–139 folds into the ADF-H 1 domain; it reads SHQTGIQASE…SLHGYKKYLL (138 aa). A phosphoserine mark is found at Ser-143 and Ser-277. The region spanning 175–313 is the ADF-H 2 domain; it reads LQGVAFPISR…TADFLYDEVH (139 aa). Tyr-309 is modified (phosphotyrosine). The disordered stretch occupies residues 317-350; the sequence is HAHKQSFAKPKGPAGKRGIRRLIRGPAEAEATTD. A Phosphothreonine modification is found at Thr-349.

The protein belongs to the actin-binding proteins ADF family. Twinfilin subfamily. Interacts with G-actin; ADP-actin form and capping protein (CP). May also be able to interact with TWF2 and phosphoinositides, PI(4,5)P2. When bound to PI(4,5)P2, it is down-regulated. Interacts with ACTG1. Phosphorylated on serine and threonine residues. As to expression, widely expressed with highest levels in brain, liver and kidney. Also expressed in heart, lung and testis. Not detected in spleen or skeletal muscle.

Its subcellular location is the cytoplasm. It is found in the cytoskeleton. In terms of biological role, actin-binding protein involved in motile and morphological processes. Inhibits actin polymerization, likely by sequestering G-actin. By capping the barbed ends of filaments, it also regulates motility. Seems to play an important role in clathrin-mediated endocytosis and distribution of endocytic organelles. The polypeptide is Twinfilin-1 (Twf1) (Mus musculus (Mouse)).